Reading from the N-terminus, the 226-residue chain is V-type proton ATPase subunit E (226 aa).

The protein belongs to the V-ATPase E subunit family. As to quaternary structure, V-ATPase is a heteromultimeric enzyme made up of two complexes: the ATP-hydrolytic V1 complex and the proton translocation V0 complex. The V1 complex consists of three catalytic AB heterodimers that form a heterohexamer, three peripheral stalks each consisting of EG heterodimers, one central rotor including subunits D and F, and the regulatory subunits C and H. The proton translocation complex V0 consists of the proton transport subunit a, a ring of proteolipid subunits c9c'', rotary subunit d, subunits e and f, and the accessory subunits VhaAC45 and ATP6AP2.

In terms of biological role, subunit of the V1 complex of vacuolar(H+)-ATPase (V-ATPase), a multisubunit enzyme composed of a peripheral complex (V1) that hydrolyzes ATP and a membrane integral complex (V0) that translocates protons. V-ATPase is responsible for acidifying and maintaining the pH of intracellular compartments and in some cell types, is targeted to the plasma membrane, where it is responsible for acidifying the extracellular environment. This Drosophila melanogaster (Fruit fly) protein is V-type proton ATPase subunit E (Vha26).